A 380-amino-acid polypeptide reads, in one-letter code: Alcohol dehydrogenase 2 (380 aa).

The Zn(2+) site is built by C48, T50, H70, C100, C103, C106, C114, and C178. An alcohol contacts are provided by T50 and H70. Residue T50 participates in NAD(+) binding. NAD(+)-binding positions include 203–208 (GLGAVG), D227, R232, T273, V296, 296–298 (VGV), F323, and R373.

Belongs to the zinc-containing alcohol dehydrogenase family. In terms of assembly, homodimer. Homotetramer. The cofactor is Zn(2+).

The protein resides in the cytoplasm. The enzyme catalyses a primary alcohol + NAD(+) = an aldehyde + NADH + H(+). It carries out the reaction a secondary alcohol + NAD(+) = a ketone + NADH + H(+). This is Alcohol dehydrogenase 2 (ADH2) from Solanum tuberosum (Potato).